The chain runs to 226 residues: Ribonuclease 3 (226 aa).

Positions 6 to 128 (INRLQRKLGY…LIGGVFLDSN (123 aa)) constitute an RNase III domain. Glutamate 41 serves as a coordination point for Mg(2+). Aspartate 45 is a catalytic residue. Positions 114 and 117 each coordinate Mg(2+). Residue glutamate 117 is part of the active site. Residues 155-225 (DPKTRLQEYL…AEQALKKLEL (71 aa)) enclose the DRBM domain.

Belongs to the ribonuclease III family. Homodimer. Mg(2+) is required as a cofactor.

It localises to the cytoplasm. It catalyses the reaction Endonucleolytic cleavage to 5'-phosphomonoester.. Functionally, digests double-stranded RNA. Involved in the processing of primary rRNA transcript to yield the immediate precursors to the large and small rRNAs (23S and 16S). Processes some mRNAs, and tRNAs when they are encoded in the rRNA operon. Processes pre-crRNA and tracrRNA of type II CRISPR loci if present in the organism. This Salmonella typhi protein is Ribonuclease 3.